Consider the following 948-residue polypeptide: RNA polymerase-associated protein RapA (948 aa).

Positions 164–332 (EVADRSAPRV…FARLRLLDPN (169 aa)) constitute a Helicase ATP-binding domain. 177–184 (DEVGLGKT) lines the ATP pocket. Residues 278 to 281 (DEAH) carry the DEAH box motif. The region spanning 473–627 (RVDWLIDTLK…TCPTGNALQH (155 aa)) is the Helicase C-terminal domain.

This sequence belongs to the SNF2/RAD54 helicase family. RapA subfamily. Interacts with the RNAP. Has a higher affinity for the core RNAP than for the holoenzyme. Its ATPase activity is stimulated by binding to RNAP.

Transcription regulator that activates transcription by stimulating RNA polymerase (RNAP) recycling in case of stress conditions such as supercoiled DNA or high salt concentrations. Probably acts by releasing the RNAP, when it is trapped or immobilized on tightly supercoiled DNA. Does not activate transcription on linear DNA. Probably not involved in DNA repair. In Pseudomonas putida (strain ATCC 700007 / DSM 6899 / JCM 31910 / BCRC 17059 / LMG 24140 / F1), this protein is RNA polymerase-associated protein RapA.